Reading from the N-terminus, the 576-residue chain is Putative ankyrin repeat protein L86 (576 aa).

ANK repeat units lie at residues 68 to 101 (HGWT…DPNI), 118 to 147 (TRIN…NVNF), 159 to 188 (SGGF…NPNI), 192 to 223 (KGNT…DLNS), 227 to 260 (KRKT…NPNI), 264 to 300 (KGNT…NPNI), 304 to 337 (SGIS…DPNI), 341 to 373 (QGLT…DPNI), 377 to 408 (KGKN…NPNA), 412 to 446 (KGRT…SLTD), and 448 to 480 (NGKK…TFDV).

This chain is Putative ankyrin repeat protein L86, found in Acanthamoeba polyphaga mimivirus (APMV).